Reading from the N-terminus, the 166-residue chain is 6,7-dimethyl-8-ribityllumazine synthase (166 aa).

Residues W31, 63–65 (SFE), and 85–87 (VII) each bind 5-amino-6-(D-ribitylamino)uracil. 90–91 (GT) is a (2S)-2-hydroxy-3-oxobutyl phosphate binding site. The active-site Proton donor is the H93. F118 contacts 5-amino-6-(D-ribitylamino)uracil. Residue R132 participates in (2S)-2-hydroxy-3-oxobutyl phosphate binding.

It belongs to the DMRL synthase family.

It catalyses the reaction (2S)-2-hydroxy-3-oxobutyl phosphate + 5-amino-6-(D-ribitylamino)uracil = 6,7-dimethyl-8-(1-D-ribityl)lumazine + phosphate + 2 H2O + H(+). It participates in cofactor biosynthesis; riboflavin biosynthesis; riboflavin from 2-hydroxy-3-oxobutyl phosphate and 5-amino-6-(D-ribitylamino)uracil: step 1/2. Its function is as follows. Catalyzes the formation of 6,7-dimethyl-8-ribityllumazine by condensation of 5-amino-6-(D-ribitylamino)uracil with 3,4-dihydroxy-2-butanone 4-phosphate. This is the penultimate step in the biosynthesis of riboflavin. In Cutibacterium acnes (strain DSM 16379 / KPA171202) (Propionibacterium acnes), this protein is 6,7-dimethyl-8-ribityllumazine synthase.